Consider the following 299-residue polypeptide: Regucalcin (299 aa).

Glu18 lines the a divalent metal cation pocket. Arg101, Asn103, and Glu121 together coordinate substrate. At Lys144 the chain carries N6-succinyllysine. Residues Asn154 and Asp204 each contribute to the a divalent metal cation site. Asp204 (proton donor/acceptor) is an active-site residue. N6-succinyllysine is present on residues Lys244 and Lys253.

This sequence belongs to the SMP-30/CGR1 family. Monomer. It depends on Zn(2+) as a cofactor. Mn(2+) is required as a cofactor. Ca(2+) serves as cofactor. The cofactor is Mg(2+).

It is found in the cytoplasm. The enzyme catalyses D-glucono-1,5-lactone + H2O = D-gluconate + H(+). In terms of biological role, gluconolactonase with low activity towards other sugar lactones, including gulonolactone and galactonolactone. Can also hydrolyze diisopropyl phosphorofluoridate and phenylacetate (in vitro). Calcium-binding protein. Modulates Ca(2+) signaling, and Ca(2+)-dependent cellular processes and enzyme activities. The chain is Regucalcin (RGN) from Macaca fascicularis (Crab-eating macaque).